The following is a 197-amino-acid chain: Phosphoheptose isomerase (197 aa).

Residues 34-196 (MVHCLLGGNK…DRTLFPQDEQ (163 aa)) form the SIS domain. 49–51 (NGG) is a binding site for substrate. Positions 58 and 62 each coordinate Zn(2+). Substrate contacts are provided by residues Glu62, 91 to 92 (ND), 117 to 119 (STS), Ser122, and Gln172. The Zn(2+) site is built by Gln172 and His180.

It belongs to the SIS family. GmhA subfamily. As to quaternary structure, homotetramer. The cofactor is Zn(2+).

Its subcellular location is the cytoplasm. The enzyme catalyses 2 D-sedoheptulose 7-phosphate = D-glycero-alpha-D-manno-heptose 7-phosphate + D-glycero-beta-D-manno-heptose 7-phosphate. It participates in carbohydrate biosynthesis; D-glycero-D-manno-heptose 7-phosphate biosynthesis; D-glycero-alpha-D-manno-heptose 7-phosphate and D-glycero-beta-D-manno-heptose 7-phosphate from sedoheptulose 7-phosphate: step 1/1. Functionally, catalyzes the isomerization of sedoheptulose 7-phosphate in D-glycero-D-manno-heptose 7-phosphate. This chain is Phosphoheptose isomerase, found in Shewanella sp. (strain W3-18-1).